Reading from the N-terminus, the 95-residue chain is Acylphosphatase (95 aa).

Residues 9 to 95 (RLTAWVHGRV…KGGLTGFVER (87 aa)) enclose the Acylphosphatase-like domain. Residues Arg-24 and Asn-42 contribute to the active site.

The protein belongs to the acylphosphatase family.

It catalyses the reaction an acyl phosphate + H2O = a carboxylate + phosphate + H(+). The sequence is that of Acylphosphatase (acyP) from Saccharopolyspora erythraea (strain ATCC 11635 / DSM 40517 / JCM 4748 / NBRC 13426 / NCIMB 8594 / NRRL 2338).